The chain runs to 684 residues: TBC1 domain family member 23 (684 aa).

In terms of domain architecture, Rab-GAP TBC spans 44–225 (PLPAELRAKV…AIWDGYLQQA (182 aa)). Residue Ser300 is modified to Phosphoserine. The Rhodanese domain occupies 334–446 (EGVRFFVVDC…LQQHLADINV (113 aa)). Residues Ser469, Ser474, and Ser507 each carry the phosphoserine modification. At Thr514 the chain carries Phosphothreonine. The tract at residues 514 to 558 (TPVDRHVSSSDRVGKPYRGVKPVFSIGDEEEYDTDEIDSSSMSDD) is may mediate the interaction with C17orf75, FAM91A1 and WDR11. Residues 514 to 684 (TPVDRHVSSS…IMKVLDALES (171 aa)) are may mediate the interaction with WASHC1. Ser556 carries the post-translational modification Phosphoserine. Positions 559–684 (DRKEVVNIQT…IMKVLDALES (126 aa)) are may mediate the interaction with FKBP15 and WASHC2; required for endosome to Golgi trafficking.

As to quaternary structure, directly interacts with GOLGA1 and GOLGA4. Interacts with FAM91A1, C17ORF75 and WDR11; the interaction recruits TBC1D23 to AP-1-derived vesicles. Directly interacts with WASHC1 and WASHC2/FAM21. Interacts with FKBP15.

The protein resides in the golgi apparatus. It is found in the trans-Golgi network. Its subcellular location is the cytoplasmic vesicle. Its function is as follows. Putative Rab GTPase-activating protein which plays a role in vesicular trafficking. Involved in endosome-to-Golgi trafficking. Acts as a bridging protein by binding simultaneously to golgins, including GOLGA1 and GOLGA4, located at the trans-Golgi, and to the WASH complex, located on endosome-derived vesicles. Together with WDR11 complex facilitates the golgin-mediated capture of vesicles generated using AP-1. Plays a role in brain development, including in cortical neuron positioning. May also be important for neurite outgrowth, possibly through its involvement in membrane trafficking and cargo delivery, 2 processes which are essential for axonal and dendritic growth. May act as a general inhibitor of innate immunity signaling, strongly inhibiting multiple TLR and dectin/CLEC7A-signaling pathways. Does not alter initial activation events, but instead affects maintenance of inflammatory gene expression several hours after bacterial lipopolysaccharide (LPS) challenge. This is TBC1 domain family member 23 (Tbc1d23) from Mus musculus (Mouse).